Reading from the N-terminus, the 668-residue chain is Phosphoglycerate transport system sensor protein PgtB (668 aa).

Helical transmembrane passes span 20 to 40 (GAFL…LYSW) and 342 to 362 (LILV…HYFI). The HAMP domain maps to 364-416 (SRLVKRFTALNQAVVQIGLGRTDSTIPVYGRDELGRIARLLRHTLGQLNMQRR). The Histidine kinase domain maps to 454–663 (TLAHEINQPL…CVVLQFSVTD (210 aa)). Residue histidine 457 is modified to Phosphohistidine; by autocatalysis.

It is found in the cell inner membrane. The enzyme catalyses ATP + protein L-histidine = ADP + protein N-phospho-L-histidine.. Member of the two-component regulatory system PgtB/PgtA that regulates the inducible phosphoglycerate transport system. Activates PgtA by phosphorylation. The polypeptide is Phosphoglycerate transport system sensor protein PgtB (pgtB) (Salmonella typhimurium (strain LT2 / SGSC1412 / ATCC 700720)).